A 182-amino-acid polypeptide reads, in one-letter code: CKLF-like MARVEL transmembrane domain-containing protein 3 (182 aa).

A compositionally biased stretch (acidic residues) spans 1 to 12; the sequence is MWPPDPDPDPDP. Positions 1–21 are disordered; sequence MWPPDPDPDPDPEPAGGSRPG. Residues 36–155 form the MARVEL domain; sequence FLCSLKGRLL…DFYLIFNDVA (120 aa). 3 helical membrane passes run 64–84, 101–121, and 131–151; these read ASAF…FLFA, MDFL…ITAI, and AAGV…YLIF.

The protein belongs to the chemokine-like factor family. As to expression, expressed in the leukocytes, placenta and testis.

It is found in the membrane. The chain is CKLF-like MARVEL transmembrane domain-containing protein 3 (CMTM3) from Homo sapiens (Human).